The following is a 409-amino-acid chain: Astacin-like metalloendopeptidase (409 aa).

Positions 1–19 (MDLKMLLIFIAFLLPSVLG) are cleaved as a signal peptide. A compositionally biased stretch (low complexity) spans 30–39 (TATTESTQVT). The segment at 30-54 (TATTESTQVTTEEDIYDSPSPAETD) is disordered. Positions 87–285 (SAINCRNCYW…AKINRLYNCS (199 aa)) constitute a Peptidase M12A domain. Disulfide bonds link cysteine 91/cysteine 94, cysteine 134/cysteine 284, cysteine 155/cysteine 175, cysteine 287/cysteine 313, and cysteine 339/cysteine 362. Histidine 183 lines the Zn(2+) pocket. Glutamate 184 is an active-site residue. Zn(2+) is bound by residues histidine 187 and histidine 193. The CUB domain maps to 287-399 (CSTIIDAAFG…SGFQATFTSA (113 aa)).

Zn(2+) is required as a cofactor. As to expression, expressed in ovary and gonads.

It localises to the cytoplasm. Its subcellular location is the cell membrane. The protein resides in the cytoplasmic vesicle. The protein localises to the secretory vesicle. It is found in the cortical granule. Probable oocyte-specific oolemmal receptor involved in sperm and egg adhesion and fertilization. May act as a protease. This Gallus gallus (Chicken) protein is Astacin-like metalloendopeptidase (ASTL).